We begin with the raw amino-acid sequence, 225 residues long: Holliday junction branch migration complex subunit RuvA (225 aa).

The segment at 1 to 68 (MIGWLQGQKV…DDGSSLFGFP (68 aa)) is domain I. The domain II stretch occupies residues 69–147 (ERRERDMFRT…EFSCRDPGMS (79 aa)). The interval 148-158 (LVDNGVIDSHQ) is flexible linker. The segment at 159–225 (LKDSSLHELQ…SLRWLSQEAA (67 aa)) is domain III.

The protein belongs to the RuvA family. In terms of assembly, homotetramer. Forms an RuvA(8)-RuvB(12)-Holliday junction (HJ) complex. HJ DNA is sandwiched between 2 RuvA tetramers; dsDNA enters through RuvA and exits via RuvB. An RuvB hexamer assembles on each DNA strand where it exits the tetramer. Each RuvB hexamer is contacted by two RuvA subunits (via domain III) on 2 adjacent RuvB subunits; this complex drives branch migration. In the full resolvosome a probable DNA-RuvA(4)-RuvB(12)-RuvC(2) complex forms which resolves the HJ.

The protein localises to the cytoplasm. Functionally, the RuvA-RuvB-RuvC complex processes Holliday junction (HJ) DNA during genetic recombination and DNA repair, while the RuvA-RuvB complex plays an important role in the rescue of blocked DNA replication forks via replication fork reversal (RFR). RuvA specifically binds to HJ cruciform DNA, conferring on it an open structure. The RuvB hexamer acts as an ATP-dependent pump, pulling dsDNA into and through the RuvAB complex. HJ branch migration allows RuvC to scan DNA until it finds its consensus sequence, where it cleaves and resolves the cruciform DNA. This chain is Holliday junction branch migration complex subunit RuvA, found in Prochlorococcus marinus (strain MIT 9313).